A 276-amino-acid polypeptide reads, in one-letter code: Large ribosomal subunit protein uL2c (276 aa).

Positions 223-254 are disordered; it reads VVKNPIDHPHGGGEGRSPIGRAKPVTPWGQPA.

This sequence belongs to the universal ribosomal protein uL2 family. In terms of assembly, part of the 50S ribosomal subunit.

Its subcellular location is the plastid. The protein localises to the chloroplast. This chain is Large ribosomal subunit protein uL2c (rpl2), found in Emiliania huxleyi (Coccolithophore).